Reading from the N-terminus, the 354-residue chain is Methylthioribose-1-phosphate isomerase (354 aa).

Substrate-binding positions include 58–60 (RGA), R101, and Q204. D245 serves as the catalytic Proton donor. 255–256 (NK) is a binding site for substrate.

The protein belongs to the eIF-2B alpha/beta/delta subunits family. MtnA subfamily.

It catalyses the reaction 5-(methylsulfanyl)-alpha-D-ribose 1-phosphate = 5-(methylsulfanyl)-D-ribulose 1-phosphate. Its pathway is amino-acid biosynthesis; L-methionine biosynthesis via salvage pathway; L-methionine from S-methyl-5-thio-alpha-D-ribose 1-phosphate: step 1/6. Functionally, catalyzes the interconversion of methylthioribose-1-phosphate (MTR-1-P) into methylthioribulose-1-phosphate (MTRu-1-P). The chain is Methylthioribose-1-phosphate isomerase from Xylella fastidiosa (strain M23).